The chain runs to 332 residues: Putative ketol-acid reductoisomerase 3 (332 aa).

The region spanning 1–182 (MDKTVLDASL…AIPGGIAVIS (182 aa)) is the KARI N-terminal Rossmann domain. The KARI C-terminal knotted domain occupies 183 to 329 (SFEEEALLDL…KELYKILRRK (147 aa)).

It belongs to the ketol-acid reductoisomerase family.

The catalysed reaction is (2R)-2,3-dihydroxy-3-methylbutanoate + NADP(+) = (2S)-2-acetolactate + NADPH + H(+). It carries out the reaction (2R,3R)-2,3-dihydroxy-3-methylpentanoate + NADP(+) = (S)-2-ethyl-2-hydroxy-3-oxobutanoate + NADPH + H(+). It functions in the pathway amino-acid biosynthesis; L-isoleucine biosynthesis; L-isoleucine from 2-oxobutanoate: step 2/4. It participates in amino-acid biosynthesis; L-valine biosynthesis; L-valine from pyruvate: step 2/4. The polypeptide is Putative ketol-acid reductoisomerase 3 (ilvC3) (Saccharolobus solfataricus (strain ATCC 35092 / DSM 1617 / JCM 11322 / P2) (Sulfolobus solfataricus)).